The primary structure comprises 189 residues: Protein sisterless A (189 aa).

Residues aspartate 93–arginine 124 are disordered. The segment covering aspartate 108–arginine 121 has biased composition (basic and acidic residues).

Homodimer. Interacts with dpn (via bHLH motif). Interacts with da (via bHLH motif). Interacts with Bap60. In terms of tissue distribution, localizes to all the embryonic nuclei until nuclear cycle 9, when expression ceases in the prepole cell nuclei. Associates with the somatic nuclei through cycle 10. By nuclear cycle 12, distributes uniformly in the somatic portion of the embryo and no longer associates with the nuclei. After early cycle 14 (beginning of cellularization) there is very little or no expression in the periphery of the embryo or in either the somatic or germ cells. In the yolk, accumulates at the nuclei from nuclear cycle 8 until 10-11 hours after fertilization.

The protein localises to the nucleus. Functionally, involved in sex determination and dosage compensation. Required for proper expression of Sxl in embryonic somatic cells. Also has an essential function in the yolk nuclei. Involved in endoderm migration and midgut formation. The polypeptide is Protein sisterless A (sisA) (Drosophila melanogaster (Fruit fly)).